Reading from the N-terminus, the 264-residue chain is Hydroxyethylthiazole kinase (264 aa).

Met55 lines the substrate pocket. 2 residues coordinate ATP: Arg130 and Ser176. Position 203 (Gly203) interacts with substrate.

Belongs to the Thz kinase family. Requires Mg(2+) as cofactor.

It carries out the reaction 5-(2-hydroxyethyl)-4-methylthiazole + ATP = 4-methyl-5-(2-phosphooxyethyl)-thiazole + ADP + H(+). The protein operates within cofactor biosynthesis; thiamine diphosphate biosynthesis; 4-methyl-5-(2-phosphoethyl)-thiazole from 5-(2-hydroxyethyl)-4-methylthiazole: step 1/1. Catalyzes the phosphorylation of the hydroxyl group of 4-methyl-5-beta-hydroxyethylthiazole (THZ). This chain is Hydroxyethylthiazole kinase, found in Leptospira borgpetersenii serovar Hardjo-bovis (strain JB197).